We begin with the raw amino-acid sequence, 153 residues long: Aminoglycoside N(6')-acetyltransferase type 1 (153 aa).

The N-acetyltransferase domain maps to 6–153 (PTIRQATPAD…YFRMPLEPSA (148 aa)). Substrate is bound by residues W27, Y70, E83, D119, and E140.

As to quaternary structure, homodimer.

It catalyses the reaction kanamycin B + acetyl-CoA = N(6')-acetylkanamycin B + CoA + H(+). Catalyzes the transfer of an acetyl group from acetyl-CoA to the 6'-amino group of aminoglycoside molecules conferring resistance to antibiotics containing the purpurosamine ring including amikacin, gentamicin, kanamycin B, tobramycin, netilmicin, and isepamicin. The polypeptide is Aminoglycoside N(6')-acetyltransferase type 1 (Stenotrophomonas maltophilia (Pseudomonas maltophilia)).